The sequence spans 124 residues: Small ribosomal subunit protein eS25 (124 aa).

A compositionally biased stretch (basic and acidic residues) spans 1–22 (MPPKDSKQKKDAGKSKKDKDPV). Residues 1-37 (MPPKDSKQKKDAGKSKKDKDPVNKSGGKAKKKKWSKG) form a disordered region. A compositionally biased stretch (basic residues) spans 27 to 37 (GKAKKKKWSKG).

The protein belongs to the eukaryotic ribosomal protein eS25 family. In terms of assembly, component of the small ribosomal subunit.

The protein localises to the cytoplasm. Functionally, component of the small ribosomal subunit. The ribosome is a large ribonucleoprotein complex responsible for the synthesis of proteins in the cell. The protein is Small ribosomal subunit protein eS25 (rps25) of Danio rerio (Zebrafish).